The sequence spans 253 residues: uncharacterized protein (253 aa).

The signal sequence occupies residues 1–16 (MCVVYRTSVLILLASG). C17 carries N-palmitoyl cysteine lipidation. C17 is lipidated: S-diacylglycerol cysteine.

The protein belongs to the staphylococcal tandem lipoprotein family.

The protein localises to the cell membrane. This is an uncharacterized protein from Staphylococcus aureus (strain N315).